Here is a 283-residue protein sequence, read N- to C-terminus: MAVTTALVKELRERTGAGMMDCKKALTETDGDIELAIENMRKSGAAKAAKKAGNIAAEGAIIIKKNGNVAVLVEVNCQTDFVAKDVSFLAFADKVAEAAIADTVTIEDLQAKFEEARVELVTKIGENINVRRLQYITGENLVEYRHGDRIGVVVAGVADEETLKHVAMHVAASSPEYLTPSDVPADVVAKEQQVQIEIAMNEGKSAEIAEKMVVGRMKKFTGEVSLTGQAFIMEPKKTVGEILKEKNATVTSFVRVEVGEGIERKEEDFAAEVAAQIAAAKAK.

The involved in Mg(2+) ion dislocation from EF-Tu stretch occupies residues T79–V82.

It belongs to the EF-Ts family.

The protein localises to the cytoplasm. Associates with the EF-Tu.GDP complex and induces the exchange of GDP to GTP. It remains bound to the aminoacyl-tRNA.EF-Tu.GTP complex up to the GTP hydrolysis stage on the ribosome. This is Elongation factor Ts from Pseudoalteromonas translucida (strain TAC 125).